We begin with the raw amino-acid sequence, 316 residues long: tRNA methyltransferase 10 homolog B (316 aa).

Residues 73–97 are a coiled coil; sequence EKIVAAKKSKRKQEKERRKANRAEN. The tract at residues 77–98 is disordered; that stretch reads AAKKSKRKQEKERRKANRAENP. The SAM-dependent MTase TRM10-type domain occupies 113 to 310; that stretch reads TKDKLLEAKH…KGVSSGKGYI (198 aa).

Belongs to the class IV-like SAM-binding methyltransferase superfamily. TRM10 family.

It catalyses the reaction guanosine(9) in tRNA + S-adenosyl-L-methionine = N(1)-methylguanosine(9) in tRNA + S-adenosyl-L-homocysteine + H(+). Functionally, S-adenosyl-L-methionine-dependent guanine N(1)-methyltransferase that catalyzes the formation of N(1)-methylguanine at position 9 (m1G9) in tRNAs. Probably not able to catalyze formation of N(1)-methyladenine at position 9 (m1A9) in tRNAs. The sequence is that of tRNA methyltransferase 10 homolog B (TRMT10B) from Homo sapiens (Human).